The following is a 150-amino-acid chain: Lipoprotein signal peptidase (150 aa).

3 consecutive transmembrane segments (helical) span residues 5–25 (LSLV…NWIV), 59–79 (QQWF…WFLW), and 83–103 (AQNW…GNFI). Residues Asp113 and Asp129 contribute to the active site. The helical transmembrane segment at 124–144 (IFNIADILLSVGFVLLFIAIL) threads the bilayer.

It belongs to the peptidase A8 family.

It localises to the cell membrane. It carries out the reaction Release of signal peptides from bacterial membrane prolipoproteins. Hydrolyzes -Xaa-Yaa-Zaa-|-(S,diacylglyceryl)Cys-, in which Xaa is hydrophobic (preferably Leu), and Yaa (Ala or Ser) and Zaa (Gly or Ala) have small, neutral side chains.. Its pathway is protein modification; lipoprotein biosynthesis (signal peptide cleavage). In terms of biological role, this protein specifically catalyzes the removal of signal peptides from prolipoproteins. This is Lipoprotein signal peptidase from Lactococcus lactis subsp. lactis (strain IL1403) (Streptococcus lactis).